A 1043-amino-acid polypeptide reads, in one-letter code: MHTEGEGSKESLASREERILNFWKTQEIFQKSLKNREGRTLYSFYDGPPFATGLPHYGHLLAGTIKDVVGRFATMDGYYVPRRFGWDCHGVPVEYEVEKSLNLTTPGAIEDFGVAKFNEECRKIVFRYVDEWEHYIYRVGRWVDFSATWKTMDASFMESVWWVFRSLYDQGLVYEGVKVVPFSTKLGTPLSNFEAGQNYKEVDDPSVVIKFALHGDPGSLLVWTTTPWTLVSNMAVAVGPEITYVRVADKVSGEQWILGQGCLSRWFSDPDTYEVIESFPGTALIGKSYEPPFNFFEQKRAEGAYTILPGSFVEESEGTGVVHMAPAFGEADFFVCKEHHVPMVCPVDNHGCFTEEIPEYQGQYIKSCDKGIIKSLKNQGKVFYHGTVVHRYPFCWRTDTPLIYKTVNSWFISVEKIKDKMLQANKKIHWVPEHIKEGRFGKWLEGARDWAISRNRYWGTPIPVWKSKDGDILVIGSVEELEKLTGEKVSDLHCHFVDQLKIEKDGKSFHRVPYVFDCWFDSGAMPYAQNHYPFENQKETESGFPADFIAEGLDQTRGWFYTLTVISAALFDQPVFKNAIVNGIVLAEDGNKMSKRLNNYPSPMSIMNTYGADALRLYLLDSVVVKAEDLRFSDKGVESVLKQVLLPLTNVLSFFKTYTDLYGFDANNYDKEEISYSEIDRWILSNLYTVVGKVRESMSSYNLNTAVNPFVTFIDDLTNWYIRRCRRRFWESADTPDRRAAFATLYEVLTVFCRVIAPFIPFISEDIYQQIKTENSLESVHLCDFPYIDLAKVFPDLEQRMGDAREIVGLGHSLRKEHKLKVRQPLANFYVVGPKDRLDQLDSFKQLISEELNVKNIVFYKEAPSFVKTTVKPNFRSLGRRVGEKIKDIQKALASLSQAQIQQLLTQEYLSLNLGSEEIVLHMEDVLISWETDPGYVARSSSLFTVVLDCQLTEELVVEAISRELVNKINTMRRNQKLHVSDRIVLRMQTSEEVRKAFLHYADYICEETLTTQSEFADVLEGEEWDINGHPTVIAIEVAARPH.

A 'HIGH' region motif is present at residues 49–59 (PFATGLPHYGH). Positions 592–596 (KMSKR) match the 'KMSKS' region motif. Lysine 595 is an ATP binding site.

Belongs to the class-I aminoacyl-tRNA synthetase family. IleS type 2 subfamily. In terms of assembly, monomer. Zn(2+) serves as cofactor.

It is found in the cytoplasm. It catalyses the reaction tRNA(Ile) + L-isoleucine + ATP = L-isoleucyl-tRNA(Ile) + AMP + diphosphate. Functionally, catalyzes the attachment of isoleucine to tRNA(Ile). As IleRS can inadvertently accommodate and process structurally similar amino acids such as valine, to avoid such errors it has two additional distinct tRNA(Ile)-dependent editing activities. One activity is designated as 'pretransfer' editing and involves the hydrolysis of activated Val-AMP. The other activity is designated 'posttransfer' editing and involves deacylation of mischarged Val-tRNA(Ile). In Chlamydia abortus (strain DSM 27085 / S26/3) (Chlamydophila abortus), this protein is Isoleucine--tRNA ligase.